The chain runs to 85 residues: uncharacterized protein (85 aa).

This is an uncharacterized protein from Saimiriine herpesvirus 2 (strain 488) (SaHV-2).